The sequence spans 128 residues: Large ribosomal subunit protein bL17 (128 aa).

Belongs to the bacterial ribosomal protein bL17 family. Part of the 50S ribosomal subunit. Contacts protein L32.

The sequence is that of Large ribosomal subunit protein bL17 from Streptococcus pneumoniae serotype 4 (strain ATCC BAA-334 / TIGR4).